Here is a 100-residue protein sequence, read N- to C-terminus: Small ribosomal subunit protein eS24 (100 aa).

Belongs to the eukaryotic ribosomal protein eS24 family.

The chain is Small ribosomal subunit protein eS24 from Methanothermobacter thermautotrophicus (strain ATCC 29096 / DSM 1053 / JCM 10044 / NBRC 100330 / Delta H) (Methanobacterium thermoautotrophicum).